Reading from the N-terminus, the 372-residue chain is DNA primase small subunit PriS (372 aa).

Catalysis depends on residues Asp-95, Asp-97, and Asp-280.

It belongs to the eukaryotic-type primase small subunit family. Heterodimer of a small subunit (PriS) and a large subunit (PriL). The cofactor is Mg(2+). It depends on Mn(2+) as a cofactor.

Its function is as follows. Catalytic subunit of DNA primase, an RNA polymerase that catalyzes the synthesis of short RNA molecules used as primers for DNA polymerase during DNA replication. The small subunit contains the primase catalytic core and has DNA synthesis activity on its own. Binding to the large subunit stabilizes and modulates the activity, increasing the rate of DNA synthesis while decreasing the length of the DNA fragments, and conferring RNA synthesis capability. The DNA polymerase activity may enable DNA primase to also catalyze primer extension after primer synthesis. May also play a role in DNA repair. In Cenarchaeum symbiosum (strain A), this protein is DNA primase small subunit PriS.